The chain runs to 230 residues: Orotidine 5'-phosphate decarboxylase (230 aa).

Substrate is bound by residues Asp-10, Lys-31, 58–67, Thr-117, Arg-179, Gln-188, Gly-208, and Arg-209; that span reads DLKLHDIPNT. Lys-60 acts as the Proton donor in catalysis. The tract at residues 177-196 is disordered; the sequence is GIRPKDASSDDQKRITTPED. The segment covering 179–196 has biased composition (basic and acidic residues); the sequence is RPKDASSDDQKRITTPED.

This sequence belongs to the OMP decarboxylase family. Type 1 subfamily. In terms of assembly, homodimer.

The enzyme catalyses orotidine 5'-phosphate + H(+) = UMP + CO2. It participates in pyrimidine metabolism; UMP biosynthesis via de novo pathway; UMP from orotate: step 2/2. Catalyzes the decarboxylation of orotidine 5'-monophosphate (OMP) to uridine 5'-monophosphate (UMP). The chain is Orotidine 5'-phosphate decarboxylase from Staphylococcus saprophyticus subsp. saprophyticus (strain ATCC 15305 / DSM 20229 / NCIMB 8711 / NCTC 7292 / S-41).